The primary structure comprises 2226 residues: Rotatin (2226 aa).

Residues 295 to 345 (ARGTHHSQNPSPGSSSPRPSVVGRTGQRPRGDGQDWDAASSSGSSSHAHVN) are disordered. Low complexity-rich tracts occupy residues 304–318 (PSPGSSSPRPSVVGR) and 332–343 (AASSSGSSSHAH). Phosphoserine is present on Ser310. At Lys811 the chain carries N6-acetyllysine. The segment at 1534-1554 (SRTSQDRDPSSLSTSETTVAP) is disordered. Polar residues predominate over residues 1543–1554 (SSLSTSETTVAP).

It belongs to the rotatin family. Interacts with PPP1R35; this interaction allows the mutual recruitment to the centriole.

The protein localises to the cytoplasm. Its subcellular location is the cytoskeleton. The protein resides in the cilium basal body. It is found in the microtubule organizing center. It localises to the centrosome. Involved in the genetic cascade that governs left-right specification. Plays a role in the maintenance of a normal ciliary structure. Required for correct asymmetric expression of NODAL, LEFTY and PITX2. The chain is Rotatin from Homo sapiens (Human).